The chain runs to 78 residues: Exodeoxyribonuclease 7 small subunit (78 aa).

It belongs to the XseB family. As to quaternary structure, heterooligomer composed of large and small subunits.

It localises to the cytoplasm. The catalysed reaction is Exonucleolytic cleavage in either 5'- to 3'- or 3'- to 5'-direction to yield nucleoside 5'-phosphates.. Its function is as follows. Bidirectionally degrades single-stranded DNA into large acid-insoluble oligonucleotides, which are then degraded further into small acid-soluble oligonucleotides. This is Exodeoxyribonuclease 7 small subunit from Pediococcus pentosaceus (strain ATCC 25745 / CCUG 21536 / LMG 10740 / 183-1w).